A 471-amino-acid chain; its full sequence is Rho GTPase-activating protein 15 (471 aa).

The segment at 1 to 20 (MQKSTNSDIPVETLNPTRQG) is disordered. Position 43 is a phosphoserine (Ser43). The region spanning 79 to 189 (MVEKEGYLQK…WFHAIKNAID (111 aa)) is the PH domain. Residues Ser196, Ser199, and Ser243 each carry the phosphoserine modification. Positions 281 to 470 (SHLHTLCERE…LMLSAYDQIF (190 aa)) constitute a Rho-GAP domain.

Its subcellular location is the cytoplasm. It localises to the membrane. GTPase activator for the Rho-type GTPases by converting them to an inactive GDP-bound state. Has activity toward RAC1. Overexpression results in an increase in actin stress fibers and cell contraction. This Bos taurus (Bovine) protein is Rho GTPase-activating protein 15 (ARHGAP15).